We begin with the raw amino-acid sequence, 141 residues long: Small ribosomal subunit protein bS6 (141 aa).

The interval 96-141 (VTGPSEMLKAEENRSERRERRERPEHADGAEGDDSNDSDNSDNADE) is disordered. The span at 103 to 124 (LKAEENRSERRERRERPEHADG) shows a compositional bias: basic and acidic residues. Positions 125–141 (AEGDDSNDSDNSDNADE) are enriched in acidic residues.

It belongs to the bacterial ribosomal protein bS6 family.

In terms of biological role, binds together with bS18 to 16S ribosomal RNA. This Pseudomonas entomophila (strain L48) protein is Small ribosomal subunit protein bS6.